The following is a 562-amino-acid chain: Dihydroxy-acid dehydratase (562 aa).

Residue aspartate 80 participates in Mg(2+) binding. Position 121 (cysteine 121) interacts with [2Fe-2S] cluster. The Mg(2+) site is built by aspartate 122 and lysine 123. At lysine 123 the chain carries N6-carboxylysine. Residue cysteine 194 coordinates [2Fe-2S] cluster. A Mg(2+)-binding site is contributed by glutamate 446. Serine 472 acts as the Proton acceptor in catalysis.

The protein belongs to the IlvD/Edd family. As to quaternary structure, homodimer. Requires [2Fe-2S] cluster as cofactor. The cofactor is Mg(2+).

It catalyses the reaction (2R)-2,3-dihydroxy-3-methylbutanoate = 3-methyl-2-oxobutanoate + H2O. The enzyme catalyses (2R,3R)-2,3-dihydroxy-3-methylpentanoate = (S)-3-methyl-2-oxopentanoate + H2O. Its pathway is amino-acid biosynthesis; L-isoleucine biosynthesis; L-isoleucine from 2-oxobutanoate: step 3/4. It functions in the pathway amino-acid biosynthesis; L-valine biosynthesis; L-valine from pyruvate: step 3/4. Functionally, functions in the biosynthesis of branched-chain amino acids. Catalyzes the dehydration of (2R,3R)-2,3-dihydroxy-3-methylpentanoate (2,3-dihydroxy-3-methylvalerate) into 2-oxo-3-methylpentanoate (2-oxo-3-methylvalerate) and of (2R)-2,3-dihydroxy-3-methylbutanoate (2,3-dihydroxyisovalerate) into 2-oxo-3-methylbutanoate (2-oxoisovalerate), the penultimate precursor to L-isoleucine and L-valine, respectively. The polypeptide is Dihydroxy-acid dehydratase (Staphylococcus haemolyticus (strain JCSC1435)).